Consider the following 73-residue polypeptide: Protein SlyX homolog (73 aa).

Belongs to the SlyX family.

This is Protein SlyX homolog from Histophilus somni (strain 2336) (Haemophilus somnus).